Here is a 387-residue protein sequence, read N- to C-terminus: Sorting nexin-7 (387 aa).

The 122-residue stretch at 30 to 151 (KDLFITVDEP…IFLTAQAWEL (122 aa)) folds into the PX domain. The a 1,2-diacyl-sn-glycero-3-phospho-(1D-myo-inositol-3-phosphate) site is built by Arg73, Gln75, Lys103, and Arg117. Positions 178 to 387 (GVKNRPEEFM…HLEEASEDKP (210 aa)) constitute a BAR domain.

The protein belongs to the sorting nexin family. As to quaternary structure, heterodimer; heterodimerizes with SNX4.

Its subcellular location is the early endosome membrane. Involved in the regulation of endocytosis and in several stages of intracellular trafficking. Together with SNX4, involved in autophagosome assembly by regulating trafficking and recycling of phospholipid scramblase ATG9A. The chain is Sorting nexin-7 from Homo sapiens (Human).